Here is a 333-residue protein sequence, read N- to C-terminus: Glycerol-3-phosphate dehydrogenase [NAD(P)+] (333 aa).

NADPH-binding residues include Trp11, Arg34, and Lys107. 3 residues coordinate sn-glycerol 3-phosphate: Lys107, Gly136, and Ser138. NADPH is bound at residue Ala140. Lys191, Asp244, Ser254, Arg255, and Asn256 together coordinate sn-glycerol 3-phosphate. Lys191 (proton acceptor) is an active-site residue. Arg255 is an NADPH binding site. Ile279 and Glu281 together coordinate NADPH.

This sequence belongs to the NAD-dependent glycerol-3-phosphate dehydrogenase family.

The protein resides in the cytoplasm. The enzyme catalyses sn-glycerol 3-phosphate + NAD(+) = dihydroxyacetone phosphate + NADH + H(+). It catalyses the reaction sn-glycerol 3-phosphate + NADP(+) = dihydroxyacetone phosphate + NADPH + H(+). Its pathway is membrane lipid metabolism; glycerophospholipid metabolism. Catalyzes the reduction of the glycolytic intermediate dihydroxyacetone phosphate (DHAP) to sn-glycerol 3-phosphate (G3P), the key precursor for phospholipid synthesis. The protein is Glycerol-3-phosphate dehydrogenase [NAD(P)+] of Nitrosospira multiformis (strain ATCC 25196 / NCIMB 11849 / C 71).